A 91-amino-acid polypeptide reads, in one-letter code: MTKGTFSFGRRHTKSHTLCRRCGKSSFHIQKKTCASCGYPSAKTRSYNWSIKAQRRKTTGTGRTRYLKTVHKRFNSGFKEASLAVKKTAAK.

Positions 19, 22, 34, and 37 each coordinate Zn(2+). The C4-type zinc finger occupies 19–37 (CRRCGKSSFHIQKKTCASC).

Belongs to the eukaryotic ribosomal protein eL37 family. Zn(2+) is required as a cofactor.

Binds to the 23S rRNA. The chain is Large ribosomal subunit protein eL37 (rpl37) from Dictyostelium discoideum (Social amoeba).